A 39-amino-acid polypeptide reads, in one-letter code: Photosystem II reaction center protein L (39 aa).

Residues Ser-18–Phe-38 form a helical membrane-spanning segment.

It belongs to the PsbL family. In terms of assembly, PSII is composed of 1 copy each of membrane proteins PsbA, PsbB, PsbC, PsbD, PsbE, PsbF, PsbH, PsbI, PsbJ, PsbK, PsbL, PsbM, PsbT, PsbX, PsbY, PsbZ, Psb30/Ycf12, peripheral proteins PsbO, CyanoQ (PsbQ), PsbU, PsbV and a large number of cofactors. It forms dimeric complexes.

The protein localises to the cellular thylakoid membrane. Its function is as follows. One of the components of the core complex of photosystem II (PSII). PSII is a light-driven water:plastoquinone oxidoreductase that uses light energy to abstract electrons from H(2)O, generating O(2) and a proton gradient subsequently used for ATP formation. It consists of a core antenna complex that captures photons, and an electron transfer chain that converts photonic excitation into a charge separation. This subunit is found at the monomer-monomer interface and is required for correct PSII assembly and/or dimerization. This Rippkaea orientalis (strain PCC 8801 / RF-1) (Cyanothece sp. (strain PCC 8801)) protein is Photosystem II reaction center protein L.